The following is a 921-amino-acid chain: MAGHPEENAQLLSTEQESMSRNSSDSVASTASTTSLVFDRIGERVAANGSEKPTMVTPKFPPRGERAYADDEHTQIHLEEEEEKDYDMEDGAFLTNGATNKSVDKKLRRLIWIIGGVFIGAWVLALFIFLGKQAYKHSSESPHDPQATSSRGSGKKVTMDQVMGGQWRATKHSISWIEGANGEDGLLLEQGSVGKDYLIVEDVRTQSPSAVGTLDTMTLMKNGYFEVAGRSLTPSKVYPSKDLKKVLVATDVQSNWRHSFYAKYWIFDVETQTAEPLDPVDLDGRVQLASWSPKSDAIVFTRDNNMYLRKLASPTVVQITVDGGPEFFYGVPDWVYEEEVFAGASATWWDDSGKYIAFLRTNESEVPEYPVQYFVSRPSGKDPLPGEENYPEVREIKYPKAGAPNPTVDLLFYDISKAEVFEVKIAGGFEPKDLLITEVVWAGSTGKALIRETNRESDVLRVVLVDVVAREGKTVRFTDIAKLDGGWFEVSEDTRYIPADPANGRPHDGYIDTIIHENYDHLGYFTPMDNSEPILLTSGDWEVVKAPSAVDLKNNIVYFISTKESPITRQLYSVKLDGTDLKAITDTSTEGYYGASFSKGAGYVLLNYNGPNIPWQKVISTPSNDNQYTHIIEENKGLADMAKKHELPILIYQTVTVDGFELQVVERRPPHFNPKKKYPVLFYLYGGPGSQTVSKSFGVDFQSYIASNLGYIVVTVDGRGTGFIGRKARTIIRGNIGHYEARDQIETAKIWASKKYVDESRMAIWGWSYGGFMTLKTLEQDAGETFSYGMAVAPVTDWRFYDSIYTERYMHTPQHNPGGYDNTSISDVKSLAKNVRFLVMHGVADDNVHMQNTLTLLDKLDLAGVENYDVHVFPDSDHSIYFHNANRIVYDKLNNWLINAFNGEWLRTANAVPLEIDAAKV.

2 disordered regions span residues 1–33 and 45–66; these read MAGH…TAST and VAAN…RGER. Residues 1–109 are Cytoplasmic-facing; that stretch reads MAGHPEENAQ…NKSVDKKLRR (109 aa). The segment covering 10–22 has biased composition (polar residues); that stretch reads QLLSTEQESMSRN. The span at 23-33 shows a compositional bias: low complexity; it reads SSDSVASTAST. Residues 110 to 130 form a helical; Signal-anchor for type II membrane protein membrane-spanning segment; sequence LIWIIGGVFIGAWVLALFIFL. The Vacuolar segment spans residues 131 to 921; that stretch reads GKQAYKHSSE…VPLEIDAAKV (791 aa). The tract at residues 138–157 is disordered; the sequence is SSESPHDPQATSSRGSGKKV. Asn362 carries N-linked (GlcNAc...) asparagine glycosylation. Ser768 serves as the catalytic Charge relay system. An N-linked (GlcNAc...) asparagine glycan is attached at Asn822. Catalysis depends on charge relay system residues Asp845 and His878.

This sequence belongs to the peptidase S9B family.

It localises to the vacuole membrane. It carries out the reaction Release of an N-terminal dipeptide, Xaa-Yaa-|-Zaa-, from a polypeptide, preferentially when Yaa is Pro, provided Zaa is neither Pro nor hydroxyproline.. Functionally, type IV dipeptidyl-peptidase which removes N-terminal dipeptides sequentially from polypeptides having unsubstituted N-termini provided that the penultimate residue is proline. This Botryotinia fuckeliana (strain B05.10) (Noble rot fungus) protein is Probable dipeptidyl-aminopeptidase B (dapB).